Reading from the N-terminus, the 1612-residue chain is uncharacterized protein (1612 aa).

Positions 23–52 form a coiled coil; that stretch reads ENKNIEMTTLKDKKEMKNENLSKINVKKEN. Residues 46–93 are compositionally biased toward basic and acidic residues; it reads INVKKENHDKNHDKNHDKNHDKNHDKNHDKNHDKNHDKNHDKNHDKNH. 2 disordered regions span residues 46–94 and 369–400; these read INVK…KNHV and EDDNKSDNPLYSNNNTLKEQNTSTPLPSHEIQ. Positions 375 to 394 are enriched in polar residues; the sequence is DNPLYSNNNTLKEQNTSTPL. Residues 479-499 form a helical membrane-spanning segment; sequence FIVTLSEICLILTPHYVNIIN. 4 disordered regions span residues 698-777, 992-1037, 1091-1157, and 1257-1291; these read TSLT…EKKL, NELD…KNDP, SGKS…RNMS, and NQTTNNNTYNNQTSNHMNENLHTDESSKSNNNQDK. Basic and acidic residues predominate over residues 708–777; that stretch reads KNDEIKKTGE…KKKTGEEKKL (70 aa). Low complexity-rich tracts occupy residues 996–1028, 1102–1140, and 1257–1271; these read NNNNKNNNNNKNNNNNKNNNNNNNNNNNNNNNN, SNNNNNVNNMNNNMNNNMNNNMNNHMNSNNNVVDSNSTN, and NQTTNNNTYNNQTSN. Coiled coils occupy residues 1338 to 1362, 1444 to 1469, and 1553 to 1601; these read YCNNKNKNKNKNKNKNKNMEQINNK, SNKKILIEKLIDKLDDYKKKINIDND, and NMED…KFLT. Over residues 1554-1566 the composition is skewed to basic and acidic residues; sequence MEDEKNEKLNDKE. Residues 1554 to 1612 are disordered; that stretch reads MEDEKNEKLNDKEGEYEDVTENLNEQEAEEEAEEEAEEEEEEEDKFLTPEHLPINVEIK. The span at 1567 to 1597 shows a compositional bias: acidic residues; that stretch reads GEYEDVTENLNEQEAEEEAEEEAEEEEEEED.

Its subcellular location is the membrane. This is an uncharacterized protein from Plasmodium falciparum (isolate 3D7).